The following is an 89-amino-acid chain: Large ribosomal subunit protein bL27 (89 aa).

The tract at residues methionine 1–arginine 20 is disordered.

Belongs to the bacterial ribosomal protein bL27 family.

The chain is Large ribosomal subunit protein bL27 from Ruegeria pomeroyi (strain ATCC 700808 / DSM 15171 / DSS-3) (Silicibacter pomeroyi).